Reading from the N-terminus, the 382-residue chain is Mannitol-1-phosphate 5-dehydrogenase (382 aa).

NAD(+) is bound at residue 3–14; sequence ALHFGAGNIGRG. N6-acetyllysine is present on lysine 269.

Belongs to the mannitol dehydrogenase family.

The enzyme catalyses D-mannitol 1-phosphate + NAD(+) = beta-D-fructose 6-phosphate + NADH + H(+). The chain is Mannitol-1-phosphate 5-dehydrogenase from Escherichia coli O127:H6 (strain E2348/69 / EPEC).